Reading from the N-terminus, the 365-residue chain is Carbamoyl phosphate synthase small chain (365 aa).

CPSase regions lie at residues 1-166 (MKRQ…PSPG) and 1-169 (MKRQ…GRGH). 3 residues coordinate L-glutamine: serine 45, glycine 218, and glycine 220. Residues 170-357 (RVVLVDFGMK…LTMIENFKKE (188 aa)) form the Glutamine amidotransferase type-1 domain. Residue cysteine 245 is the Nucleophile of the active site. L-glutamine contacts are provided by leucine 246, glutamine 249, asparagine 287, glycine 289, and tyrosine 290. Catalysis depends on residues histidine 330 and glutamate 332.

This sequence belongs to the CarA family. Composed of two chains; the small (or glutamine) chain promotes the hydrolysis of glutamine to ammonia, which is used by the large (or ammonia) chain to synthesize carbamoyl phosphate. Tetramer of heterodimers (alpha,beta)4.

The catalysed reaction is hydrogencarbonate + L-glutamine + 2 ATP + H2O = carbamoyl phosphate + L-glutamate + 2 ADP + phosphate + 2 H(+). The enzyme catalyses L-glutamine + H2O = L-glutamate + NH4(+). It participates in amino-acid biosynthesis; L-arginine biosynthesis; carbamoyl phosphate from bicarbonate: step 1/1. Its pathway is pyrimidine metabolism; UMP biosynthesis via de novo pathway; (S)-dihydroorotate from bicarbonate: step 1/3. In terms of biological role, small subunit of the glutamine-dependent carbamoyl phosphate synthetase (CPSase). CPSase catalyzes the formation of carbamoyl phosphate from the ammonia moiety of glutamine, carbonate, and phosphate donated by ATP, constituting the first step of 2 biosynthetic pathways, one leading to arginine and/or urea and the other to pyrimidine nucleotides. The small subunit (glutamine amidotransferase) binds and cleaves glutamine to supply the large subunit with the substrate ammonia. In Bacillus cereus (strain ZK / E33L), this protein is Carbamoyl phosphate synthase small chain.